The following is a 399-amino-acid chain: Acetate kinase 2 (399 aa).

Asn-10 lines the Mg(2+) pocket. Lys-17 contributes to the ATP binding site. A substrate-binding site is contributed by Arg-89. Asp-146 functions as the Proton donor/acceptor in the catalytic mechanism. ATP-binding positions include 206–210 (HLGNG), 281–283 (DCR), and 329–333 (GIGEN). Glu-384 lines the Mg(2+) pocket.

The protein belongs to the acetokinase family. As to quaternary structure, homodimer. Mg(2+) is required as a cofactor. Mn(2+) serves as cofactor.

It is found in the cytoplasm. The enzyme catalyses acetate + ATP = acetyl phosphate + ADP. It participates in metabolic intermediate biosynthesis; acetyl-CoA biosynthesis; acetyl-CoA from acetate: step 1/2. Catalyzes the formation of acetyl phosphate from acetate and ATP. Can also catalyze the reverse reaction. The sequence is that of Acetate kinase 2 from Neisseria meningitidis serogroup B (strain ATCC BAA-335 / MC58).